The primary structure comprises 780 residues: APC membrane recruitment protein 3 (780 aa).

Residues 20 to 32 (KLIDSPAKEDPDK) are compositionally biased toward basic and acidic residues. 7 disordered regions span residues 20–59 (KLIDSPAKEDPDKWPLSLGEQQRAYGEKSSQTSPCSQGYG), 341–407 (ELPL…FPRD), 547–569 (KGREDQATTCFPPSRQEPWAHSG), 582–617 (GEPARGSKTPSKDDSLEEGTQDFSEGQSSSEATMTS), 635–659 (KELGTPGNLRYSQGPLRPGHRGSAL), 706–729 (KNPISSKPNEAAGCGLSSSASPQD), and 749–780 (LGPQACSSVDSQPQQLCPRAPEQVPHRGSVGS). Residues 354–376 (SKASSIDTGTPKSEQPESVSTSD) show a composition bias toward polar residues. Over residues 602-617 (QDFSEGQSSSEATMTS) the composition is skewed to polar residues. Residues 753-763 (ACSSVDSQPQQ) are compositionally biased toward polar residues.

This sequence belongs to the Amer family.

The protein resides in the cell membrane. Its function is as follows. Regulator of the canonical Wnt signaling pathway. Acts by specifically binding phosphatidylinositol 4,5-bisphosphate (PtdIns(4,5)P2), translocating to the cell membrane. This is APC membrane recruitment protein 3 (Amer3) from Mus musculus (Mouse).